The sequence spans 1883 residues: Zinc finger protein 106 (1883 aa).

Glycyl lysine isopeptide (Lys-Gly) (interchain with G-Cter in SUMO2) cross-links involve residues isoleucine 6 and lysine 37. The C2H2-type 1; atypical zinc finger occupies 20 to 44; it reads HECRVCGVTEVGLSAYAKHISGQLH. Residues 39–162 form a disordered region; sequence ISGQLHKDNV…NGGGPRGRSG (124 aa). Residues 52 to 67 show a composition bias toward acidic residues; it reads EREDDGKGEEEEEDYF. Glycyl lysine isopeptide (Lys-Gly) (interchain with G-Cter in SUMO2) cross-links involve residues lysine 69 and lysine 76. Composition is skewed to basic and acidic residues over residues 77–86, 96–116, and 128–138; these read QRKEQSRQDE, SDDRRPQWRREDRIPYQDRES, and PQRDWKWEKDG. Residue lysine 133 forms a Glycyl lysine isopeptide (Lys-Gly) (interchain with G-Cter in SUMO2) linkage. The span at 139 to 148 shows a compositional bias: polar residues; that stretch reads FNNTRKNSFP. Residues lysine 243, lysine 287, and lysine 305 each participate in a glycyl lysine isopeptide (Lys-Gly) (interchain with G-Cter in SUMO2) cross-link. Polar residues predominate over residues 322–338; that stretch reads QTTKQADTATSKVSGKN. Positions 322–356 are disordered; it reads QTTKQADTATSKVSGKNGSAAREKPRRWTPYPSQK. Residues lysine 356, lysine 365, lysine 371, and lysine 417 each participate in a glycyl lysine isopeptide (Lys-Gly) (interchain with G-Cter in SUMO2) cross-link. The segment at 389-423 is disordered; that stretch reads IQEPQTDETRNSPTQKTQKEIHTGSLNHKASSDSA. The span at 412–423 shows a compositional bias: polar residues; the sequence is GSLNHKASSDSA. Serine 422 carries the phosphoserine modification. Residues lysine 451, lysine 461, lysine 477, lysine 492, lysine 505, lysine 515, lysine 525, lysine 539, and lysine 557 each participate in a glycyl lysine isopeptide (Lys-Gly) (interchain with G-Cter in SUMO2) cross-link. The disordered stretch occupies residues 457-501; the sequence is CPATKSLSQKQDPKNISKNTKTNFFSPGEHSNPSNKPTVEDNHGP. Polar residues predominate over residues 461-493; it reads KSLSQKQDPKNISKNTKTNFFSPGEHSNPSNKP. Residues 586–637 are disordered; the sequence is LEDESDGETSDTEKHGTKIGTLGSATTELLSGSTRTADEKEEDDRILKTSRE. Phosphoserine is present on serine 590. A Glycyl lysine isopeptide (Lys-Gly) (interchain with G-Cter in SUMO2) cross-link involves residue lysine 603. Positions 608 to 620 are enriched in polar residues; the sequence is GSATTELLSGSTR. Serine 641 and serine 661 each carry phosphoserine. Residues lysine 671, lysine 684, lysine 705, lysine 721, lysine 741, lysine 775, and lysine 807 each participate in a glycyl lysine isopeptide (Lys-Gly) (interchain with G-Cter in SUMO2) cross-link. Phosphoserine occurs at positions 859, 861, 864, and 893. The segment at 879 to 945 is disordered; that stretch reads EEGTGKENEP…HSAQLSSDHI (67 aa). Polar residues predominate over residues 888 to 906; the sequence is PQQMVSPSNSLRAGQSQKA. Residues lysine 905 and lysine 911 each participate in a glycyl lysine isopeptide (Lys-Gly) (interchain with G-Cter in SUMO2) cross-link. Serine 937 is modified (phosphoserine). Lysine 953 participates in a covalent cross-link: Glycyl lysine isopeptide (Lys-Gly) (interchain with G-Cter in SUMO2). Polar residues predominate over residues 958 to 976; it reads QERSIPPSENQNSQESNGE. Disordered regions lie at residues 958 to 982, 997 to 1048, 1121 to 1140, and 1182 to 1218; these read QERSIPPSENQNSQESNGEGNCLSS, ATDS…KERS, EPSEHPDQVPCSLTRERRNS, and PTFQTHGSVPAPDSSVQIKQEPMSPEQDENVNAVPPS. Threonine 1021 is subject to Phosphothreonine. 3 positions are modified to phosphoserine: serine 1025, serine 1026, and serine 1031. Residues 1035 to 1045 show a composition bias toward basic residues; the sequence is KNKRRKIKGKK. Serine 1249 carries the post-translational modification Phosphoserine. The interval 1252-1483 is disordered; sequence ESTESFHEPS…EVSSTSEIGT (232 aa). A compositionally biased stretch (basic and acidic residues) spans 1255–1277; it reads ESFHEPSQELKFSVEQRNTRNRE. Residue lysine 1265 forms a Glycyl lysine isopeptide (Lys-Gly) (interchain with G-Cter in SUMO2) linkage. Composition is skewed to polar residues over residues 1278–1291 and 1299–1312; these read NSPSSQSAGLSSIN and KGNSGSEACTSSFL. Phosphoserine is present on residues serine 1279, serine 1281, and serine 1284. Lysine 1299 is covalently cross-linked (Glycyl lysine isopeptide (Lys-Gly) (interchain with G-Cter in SUMO2)). Serine 1302 is subject to Phosphoserine. Lysine 1324 is covalently cross-linked (Glycyl lysine isopeptide (Lys-Gly) (interchain with G-Cter in SUMO2)). Position 1328 is a phosphoserine (serine 1328). Polar residues predominate over residues 1333–1346; that stretch reads PEQQAESTLTSAET. A compositionally biased stretch (basic residues) spans 1349–1362; sequence SKKKKKLRKKKSLR. Serine 1370 is subject to Phosphoserine. Threonine 1372 carries the post-translational modification Phosphothreonine. Glycyl lysine isopeptide (Lys-Gly) (interchain with G-Cter in SUMO2) cross-links involve residues lysine 1380, lysine 1392, and lysine 1395. 2 stretches are compositionally biased toward basic and acidic residues: residues 1402–1416 and 1444–1456; these read EDSRTGREQESVRDE and GEEKPDSPSKKDI. Lysine 1454 is covalently cross-linked (Glycyl lysine isopeptide (Lys-Gly) (interchain with G-Cter in SUMO2)). Positions 1457–1481 are enriched in polar residues; the sequence is WNSTEQNPLETSRSGCDEVSSTSEI. Serine 1468 bears the Phosphoserine mark. Residues lysine 1486 and lysine 1504 each participate in a glycyl lysine isopeptide (Lys-Gly) (interchain with G-Cter in SUMO2) cross-link. A compositionally biased stretch (polar residues) spans 1502–1513; that stretch reads SIKGSKNSSEIS. Residues 1502–1527 are disordered; that stretch reads SIKGSKNSSEISSEPGDDDEPTEGSF. 6 WD repeats span residues 1529 to 1568, 1570 to 1611, 1654 to 1695, 1698 to 1737, 1738 to 1775, and 1778 to 1815; these read GHQAAVNAIQIFGNLLYTCSADKTVRVYNLVSRKCIGVFE, HTSK…CVEQ, HGPR…LLRT, GHSKTILCMKVVNDLVFSGSSDQSVHAHNIHTGELVRIYK, GHNHAVTVVNILGKVMVTACLDKFVRVYELQSHDRLQV, and GHKDMIMCMTIHKSMIYTGCYDGSIQAVRLNLMQNYRC. Lysine 1585 is covalently cross-linked (Glycyl lysine isopeptide (Lys-Gly) (interchain with G-Cter in SUMO2)). Lysine 1737 is covalently cross-linked (Glycyl lysine isopeptide (Lys-Gly) (interchain with G-Cter in SUMO2)). Residues 1813–1838 form a C2H2-type 2; atypical zinc finger; sequence YRCWWHGCSLIFGVVDHLKQHLLTDH. Lysine 1864 participates in a covalent cross-link: Glycyl lysine isopeptide (Lys-Gly) (interchain with G-Cter in SUMO2).

In terms of assembly, interacts with KNOP1. Interacts with TARDBP and NUP107. Interacts (via N-terminus) with RBM39. Interacts with the SH3 domains of FYN and GRB2. Post-translationally, phosphorylated by FYN in vitro.

It is found in the nucleus. The protein localises to the nucleolus. Its subcellular location is the nucleus speckle. Functionally, RNA-binding protein. Specifically binds to 5'-GGGGCC-3' sequence repeats in RNA. Essential for maintenance of peripheral motor neuron and skeletal muscle function. Required for normal expression and/or alternative splicing of a number of genes in spinal cord and skeletal muscle, including the neurite outgrowth inhibitor RTN4. Also contributes to normal mitochondrial respiratory function in motor neurons, via an unknown mechanism. The sequence is that of Zinc finger protein 106 (ZNF106) from Homo sapiens (Human).